We begin with the raw amino-acid sequence, 530 residues long: ATP-dependent RNA helicase DBP3 (530 aa).

Residues Met-1–Asp-20 are compositionally biased toward basic and acidic residues. A disordered region spans residues Met-1 to Val-77. Residues Val-19–Glu-58 are a coiled coil. Residues Lys-21–Lys-50 are compositionally biased toward basic residues. Residues Ser-67 to Val-77 are compositionally biased toward low complexity. The Q motif motif lies at Leu-117–Ala-143. Residues Trp-146 to Val-322 form the Helicase ATP-binding domain. Ala-159–Thr-166 is an ATP binding site. Positions Asp-269–Asp-272 match the DEAD box motif. The Helicase C-terminal domain occupies Lys-351–Gly-500.

Belongs to the DEAD box helicase family. DDX5/DBP2 subfamily.

Its subcellular location is the nucleus. It localises to the nucleolus. The catalysed reaction is ATP + H2O = ADP + phosphate + H(+). Its function is as follows. ATP-dependent RNA helicase required for 60S ribosomal subunit synthesis. Involved in efficient pre-rRNA processing, predominantly at site A3, which is necessary for the normal formation of 25S and 5.8S rRNAs. In Vanderwaltozyma polyspora (strain ATCC 22028 / DSM 70294 / BCRC 21397 / CBS 2163 / NBRC 10782 / NRRL Y-8283 / UCD 57-17) (Kluyveromyces polysporus), this protein is ATP-dependent RNA helicase DBP3 (DBP3).